Reading from the N-terminus, the 187-residue chain is Auxin-binding protein T85 (187 aa).

A signal peptide spans 1–20; the sequence is MARHVLVVVAVLLFATAEAS. An intrachain disulfide couples cysteine 22 to cysteine 177. Residues histidine 78, histidine 80, and glutamate 84 each contribute to the Zn(2+) site. An N-linked (GlcNAc...) asparagine glycan is attached at asparagine 117. Histidine 128 provides a ligand contact to Zn(2+). The short motif at 184 to 187 is the Prevents secretion from ER element; sequence KDEL.

Homodimer.

It localises to the endoplasmic reticulum lumen. In terms of biological role, this is probably a receptor for the plant hormone auxin. The sequence is that of Auxin-binding protein T85 (T85) from Nicotiana tabacum (Common tobacco).